The sequence spans 209 residues: ATP-dependent Clp protease proteolytic subunit (209 aa).

The Nucleophile role is filled by Ser-111. The active site involves His-136.

This sequence belongs to the peptidase S14 family. As to quaternary structure, fourteen ClpP subunits assemble into 2 heptameric rings which stack back to back to give a disk-like structure with a central cavity, resembling the structure of eukaryotic proteasomes.

The protein localises to the cytoplasm. The enzyme catalyses Hydrolysis of proteins to small peptides in the presence of ATP and magnesium. alpha-casein is the usual test substrate. In the absence of ATP, only oligopeptides shorter than five residues are hydrolyzed (such as succinyl-Leu-Tyr-|-NHMec, and Leu-Tyr-Leu-|-Tyr-Trp, in which cleavage of the -Tyr-|-Leu- and -Tyr-|-Trp bonds also occurs).. In terms of biological role, cleaves peptides in various proteins in a process that requires ATP hydrolysis. Has a chymotrypsin-like activity. Plays a major role in the degradation of misfolded proteins. This is ATP-dependent Clp protease proteolytic subunit from Dechloromonas aromatica (strain RCB).